Reading from the N-terminus, the 442-residue chain is N-acetyl-S-alkylcysteine sulfoxide monooxygenase (442 aa).

Asp-58, Thr-95, His-145, Tyr-149, Ser-219, and Ser-220 together coordinate FMN.

It belongs to the NtaA/SnaA/DszA monooxygenase family. In terms of assembly, homodimer.

The catalysed reaction is (R)-N-acetyl-S-benzyl-L-cysteine sulfoxide + FMNH2 + O2 = N-acetyl-S-hydroxy-L-cysteine + benzaldehyde + FMN + H2O + H(+). It participates in amino-acid metabolism. Functionally, involved in a cysteine salvage pathway from S-alkylcysteine. Catalyzes the C-S bond cleavage in N-acetyl-S-benzyl-L-cysteine sulfoxide leading to N-acetyl-S-hydroxy-L-cysteine and benzaldehyde. This pathway is likely important in the catabolism of alkylated cysteine generated by proteolysis of alkylated glutathione formed in the detoxification of a wide range of electrophiles. Has much less efficient activity with N-acetyl-S-methyl-L-cysteine sulfoxide as substrate. Cannot use S-alkylated L-cysteine sulfones and ketone analogs as substrates, demonstrating that the sulfoxide is required for activity. The polypeptide is N-acetyl-S-alkylcysteine sulfoxide monooxygenase (Bacillus subtilis (strain 168)).